The following is a 111-amino-acid chain: Probable 4-amino-4-deoxy-L-arabinose-phosphoundecaprenol flippase subunit ArnE (111 aa).

3 helical membrane-spanning segments follow: residues 39–59 (WLAI…WVLQ), 61–81 (VPVG…TLAA), and 89–109 (VSLR…CMGV). Residues 40 to 109 (LAISLLLLGG…IVAGVMCMGV (70 aa)) form the EamA domain.

This sequence belongs to the ArnE family. Heterodimer of ArnE and ArnF.

The protein resides in the cell inner membrane. The protein operates within bacterial outer membrane biogenesis; lipopolysaccharide biosynthesis. In terms of biological role, translocates 4-amino-4-deoxy-L-arabinose-phosphoundecaprenol (alpha-L-Ara4N-phosphoundecaprenol) from the cytoplasmic to the periplasmic side of the inner membrane. This Sodalis glossinidius (strain morsitans) protein is Probable 4-amino-4-deoxy-L-arabinose-phosphoundecaprenol flippase subunit ArnE.